Consider the following 410-residue polypeptide: Adenosine receptor A2a (410 aa).

At 1 to 4 (MGSS) the chain is on the extracellular side. Residues 5-29 (VYITVELAIAVLAILGNVLVCWAVW) form a helical membrane-spanning segment. At 30-39 (INSNLQNVTN) the chain is on the cytoplasmic side. Residues 40–63 (FFVVSLAAADIAVGVLAIPFAITI) traverse the membrane as a helical segment. Residues 64–74 (STGFCAACHGC) lie on the Extracellular side of the membrane. 3 cysteine pairs are disulfide-bonded: Cys68-Cys154, Cys71-Cys143, and Cys74-Cys161. Residues 75–97 (LFFACFVLVLTQSSIFSLLAIAI) traverse the membrane as a helical segment. Residues 98-117 (DRYIAIRIPLRYNGLVTGVR) are Cytoplasmic-facing. Residues 118–140 (AKGIIAICWVLSFAIGLTPMLGW) form a helical membrane-spanning segment. The Extracellular segment spans residues 141 to 168 (NNCSQKDGNSTKTCGEGRVTCLFEDVVP). N-linked (GlcNAc...) asparagine glycans are attached at residues Asn142 and Asn149. Position 164 (Glu164) interacts with adenosine. A helical membrane pass occupies residues 169-193 (MNYMVYYNFFAFVLLPLLLMLAIYL). Topologically, residues 194–229 (RIFLAARRQLKQMESQPLPGERTRSTLQKEVHAAKS) are cytoplasmic. Residues 230 to 253 (LAIIVGLFALCWLPLHIINCFTFF) traverse the membrane as a helical segment. Position 248 (Asn248) interacts with adenosine. An intrachain disulfide couples Cys254 to Cys257. Topologically, residues 254-261 (CSTCRHAP) are extracellular. The helical transmembrane segment at 262-285 (PWLMYLAIILSHSNSVVNPFIYAY) threads the bilayer. Residues Ser272 and His273 each contribute to the adenosine site. Residues 286-410 (RIREFRQTFR…SSWSSEFAPS (125 aa)) lie on the Cytoplasmic side of the membrane. The interval 322-410 (HSTEGEQVSL…SSWSSEFAPS (89 aa)) is interaction with GAS2L2. The segment at 344-410 (GSATHSGRRP…SSWSSEFAPS (67 aa)) is disordered. Over residues 371–388 (RDVELPTQERQEGQEHPG) the composition is skewed to basic and acidic residues. Residues 401-410 (SSWSSEFAPS) show a composition bias toward polar residues.

The protein belongs to the G-protein coupled receptor 1 family. In terms of assembly, interacts (via cytoplasmic C-terminal domain) with USP4; the interaction is direct. May interact with DRD4. Interacts with NECAB2. Interacts (via cytoplasmic C-terminal domain) with GAS2L2; interaction enhances receptor-mediated adenylyl cyclase activity. Ubiquitinated. Deubiquitinated by USP4; leading to stabilization and expression at the cell surface. As to expression, expressed in striatal neurons (at protein level).

It is found in the cell membrane. In terms of biological role, receptor for adenosine. The activity of this receptor is mediated by G proteins which activate adenylyl cyclase. This Rattus norvegicus (Rat) protein is Adenosine receptor A2a (Adora2a).